A 115-amino-acid polypeptide reads, in one-letter code: Probable malate:quinone oxidoreductase (115 aa).

Residues 88 to 115 (QMPAAAPTATAKPAETPREASPQHDMAL) form a disordered region. Low complexity predominate over residues 90-101 (PAAAPTATAKPA). Basic and acidic residues predominate over residues 102–115 (ETPREASPQHDMAL).

Belongs to the MQO family. Requires FAD as cofactor.

The enzyme catalyses (S)-malate + a quinone = a quinol + oxaloacetate. It functions in the pathway carbohydrate metabolism; tricarboxylic acid cycle; oxaloacetate from (S)-malate (quinone route): step 1/1. The protein is Probable malate:quinone oxidoreductase (mqo) of Klebsiella pneumoniae.